The primary structure comprises 881 residues: Serine/threonine-protein phosphatase BSL1 (881 aa).

3 Kelch repeats span residues 60-109 (GSSS…AVGT), 269-320 (RLHV…DQDP), and 338-385 (RIYV…PRFS). Disordered stretches follow at residues 368 to 407 (SPLL…LSLD) and 436 to 464 (AGTL…ANEG). Composition is skewed to polar residues over residues 374–383 (DRTQQSSTPR) and 445–460 (TSDA…TDGT). Position 491 is a phosphoserine (Ser491). The interval 503-522 (VPMNNSDVPQPTKKFTRQKS) is disordered. Residues Asp584, His586, Asp618, and Asn650 each coordinate Mn(2+). The Proton donor role is filled by His651. Residues His703 and His782 each contribute to the Mn(2+) site. A disordered region spans residues 837–881 (ILSPENSPEHSGDDAWMQELNIQRPPTPTRGRPQPDFDRSSLAYI). Phosphoserine is present on Ser839.

Belongs to the PPP phosphatase family. BSU subfamily. In terms of assembly, interacts with CDG1 and CDL1. It depends on Mn(2+) as a cofactor. As to expression, expressed in mature cauline leaves and at the tip of influorescence, including flowers. Expressed at lower level in young tissues relative to older ones.

Its subcellular location is the nucleus. It catalyses the reaction O-phospho-L-seryl-[protein] + H2O = L-seryl-[protein] + phosphate. The enzyme catalyses O-phospho-L-threonyl-[protein] + H2O = L-threonyl-[protein] + phosphate. Phosphatase involved in elongation process, probably by acting as a regulator of brassinolide signaling. The polypeptide is Serine/threonine-protein phosphatase BSL1 (BSL1) (Arabidopsis thaliana (Mouse-ear cress)).